The chain runs to 297 residues: 4-hydroxy-tetrahydrodipicolinate synthase (297 aa).

Threonine 55 is a binding site for pyruvate. Tyrosine 144 acts as the Proton donor/acceptor in catalysis. Lysine 172 functions as the Schiff-base intermediate with substrate in the catalytic mechanism. Residue isoleucine 213 participates in pyruvate binding.

This sequence belongs to the DapA family. As to quaternary structure, homotetramer; dimer of dimers.

It localises to the cytoplasm. It catalyses the reaction L-aspartate 4-semialdehyde + pyruvate = (2S,4S)-4-hydroxy-2,3,4,5-tetrahydrodipicolinate + H2O + H(+). Its pathway is amino-acid biosynthesis; L-lysine biosynthesis via DAP pathway; (S)-tetrahydrodipicolinate from L-aspartate: step 3/4. Catalyzes the condensation of (S)-aspartate-beta-semialdehyde [(S)-ASA] and pyruvate to 4-hydroxy-tetrahydrodipicolinate (HTPA). The protein is 4-hydroxy-tetrahydrodipicolinate synthase of Lactococcus lactis subsp. cremoris (strain SK11).